The following is a 146-amino-acid chain: Large ribosomal subunit protein uL16 (146 aa).

This sequence belongs to the universal ribosomal protein uL16 family. In terms of assembly, part of the 50S ribosomal subunit.

Binds 23S rRNA and is also seen to make contacts with the A and possibly P site tRNAs. The polypeptide is Large ribosomal subunit protein uL16 (Thermomicrobium roseum (strain ATCC 27502 / DSM 5159 / P-2)).